The following is a 542-amino-acid chain: Chondroitin sulfate N-acetylgalactosaminyltransferase 2 (542 aa).

Residues 1–11 lie on the Cytoplasmic side of the membrane; it reads MPRRGLILHTR. A helical; Signal-anchor for type II membrane protein transmembrane segment spans residues 12–32; it reads THWLLLGLALLCSLVLFMYLL. At 33–542 the chain is on the lumenal side; that stretch reads ECAPQTDGNA…AYRTNSEAVG (510 aa). N41 is a glycosylation site (N-linked (GlcNAc...) asparagine). Positions 59-105 form a coiled coil; it reads ALLQEQEEHYQTRATSLKRQIAQLKQELQEMSEKMRSLQERRNVGAN. An N-linked (GlcNAc...) asparagine glycan is attached at N333. A divalent metal cation contacts are provided by D369 and H486.

Belongs to the chondroitin N-acetylgalactosaminyltransferase family. In terms of tissue distribution, ubiquitous.

The protein localises to the golgi apparatus. Its subcellular location is the golgi stack membrane. It carries out the reaction 3-O-(beta-D-GlcA-(1-&gt;3)-beta-D-Gal-(1-&gt;3)-beta-D-Gal-(1-&gt;4)-beta-D-Xyl)-L-seryl-[protein] + UDP-N-acetyl-alpha-D-galactosamine = 3-O-(beta-D-GalNAc-(1-&gt;4)-beta-D-GlcA-(1-&gt;3)-beta-D-Gal-(1-&gt;3)-beta-D-Gal-(1-&gt;4)-beta-D-Xyl)-L-seryl-[protein] + UDP + H(+). Its function is as follows. Transfers 1,4-N-acetylgalactosamine (GalNAc) from UDP-GalNAc to the non-reducing end of glucuronic acid (GlcUA). Required for addition of the first GalNAc to the core tetrasaccharide linker and for elongation of chondroitin chains. This is Chondroitin sulfate N-acetylgalactosaminyltransferase 2 (CSGALNACT2) from Homo sapiens (Human).